The following is a 963-amino-acid chain: Non-ribosomal peptide synthetase CmlP (963 aa).

Residues 492–568 (GEDAAELRRV…AAFLRHLRGE (77 aa)) enclose the Carrier domain. Ser526 is subject to O-(pantetheine 4'-phosphoryl)serine. Residues 928–963 (GRLLGTPPDTPAGDRPERTGTTAEAQNGAAHAPTPR) form a disordered region.

Belongs to the ATP-dependent AMP-binding enzyme family. It depends on pantetheine 4'-phosphate as a cofactor.

The enzyme catalyses 4-amino-L-phenylalanine + holo-[peptidyl-carrier protein] + ATP = 4-amino-L-phenylalanyl-[peptidyl-carrier protein] + AMP + diphosphate. Its pathway is antibiotic biosynthesis. Functionally, involved in chloramphenicol biosynthesis. Activates 4-amino-L-phenylalanine by adenylation and loads it onto its peptidyl carrier domain, via a thioester linkage to the phosphopanthetheine moiety. Can also adenylate tyrosine and phenylalanine at low rates, but not L-p-nitrophenylalanine or threo-phenylserine. The protein is Non-ribosomal peptide synthetase CmlP of Streptomyces venezuelae (strain ATCC 10712 / CBS 650.69 / DSM 40230 / JCM 4526 / NBRC 13096 / PD 04745).